A 595-amino-acid chain; its full sequence is Isoprene synthase, chloroplastic (595 aa).

A chloroplast-targeting transit peptide spans 1–37; sequence MATELLCLHRPISLTHKLFRNPLPKVIQATPLTLKLR. Asp345 is a dimethylallyl diphosphate binding site. The Mg(2+) site is built by Asp345 and Asp349. Positions 345-349 match the DDXXD motif motif; the sequence is DDIYD. Glu423, Arg486, and Asn489 together coordinate dimethylallyl diphosphate. 3 residues coordinate Mg(2+): Asn489, Ser493, and Glu497.

This sequence belongs to the terpene synthase family. Tpsb subfamily. It depends on Mg(2+) as a cofactor. As to expression, predominantly expressed in leaves.

The protein localises to the plastid. It is found in the chloroplast. It catalyses the reaction dimethylallyl diphosphate = isoprene + diphosphate. The protein operates within terpene metabolism. Lyase that catalyzes the formation of isoprene from dimethylallyl diphosphate, but not from isopentenyl diphosphate or geranyl diphosphate. This Populus alba (White poplar) protein is Isoprene synthase, chloroplastic.